The following is a 101-amino-acid chain: Ribonuclease P protein component 1 (101 aa).

The protein belongs to the eukaryotic/archaeal RNase P protein component 1 family. As to quaternary structure, consists of a catalytic RNA component and at least 4-5 protein subunits.

It localises to the cytoplasm. It catalyses the reaction Endonucleolytic cleavage of RNA, removing 5'-extranucleotides from tRNA precursor.. Functionally, part of ribonuclease P, a protein complex that generates mature tRNA molecules by cleaving their 5'-ends. In Methanococcoides burtonii (strain DSM 6242 / NBRC 107633 / OCM 468 / ACE-M), this protein is Ribonuclease P protein component 1.